The following is a 155-amino-acid chain: MMSSLCGMPLTYLLTAAVLSLSLTDACFIRNCPKGGKRSLDTGMVTSRECMKCGPGGTGQCVGPSICCGQDFGCHVGTAEAAVCQQENDSSTPCLVKGEACGSRDAGNCVADGICCDSESCAVNDRCRDLDGNAQANRGDLIQLIHKLLKVRDYD.

The N-terminal stretch at 1-26 (MMSSLCGMPLTYLLTAAVLSLSLTDA) is a signal peptide. An intrachain disulfide couples cysteine 27 to cysteine 32. Glycine 35 carries the post-translational modification Glycine amide. Intrachain disulfides connect cysteine 50–cysteine 94, cysteine 53–cysteine 67, cysteine 61–cysteine 84, cysteine 68–cysteine 74, cysteine 101–cysteine 115, cysteine 109–cysteine 127, and cysteine 116–cysteine 121. An N-linked (GlcNAc...) asparagine glycan is attached at asparagine 88.

It belongs to the vasopressin/oxytocin family. In terms of processing, seven disulfide bonds are present in neurophysin.

The protein resides in the secreted. The sequence is that of Conopressin/neurophysin from Lymnaea stagnalis (Great pond snail).